A 261-amino-acid polypeptide reads, in one-letter code: Calbindin (261 aa).

Alanine 2 carries the post-translational modification N-acetylalanine. Residues 2 to 7 form an interaction with RANBP9 region; the sequence is AESHLQ. EF-hand domains lie at 11–46, 53–88, 98–133, 142–177, and 186–221; these read ITASQFFEIWLHFDADGSGYLEGKELQNLIQELQQA, ELSPEMKTFVDQYGQRDDGKIGIVELAHVLPTEENF, KSCEEFMKTWRKYDTDHGGFIETEELKNFLKDLLEK, KLAEYTDLMLKLFDSNNDGKLELTEMARLLPVQENF, and MCGKEFNKAFELYDQDGNGYIDENELDALLKDLCEK. Positions 24, 26, 28, 30, and 35 each coordinate Ca(2+). Ca(2+)-binding residues include aspartate 111, aspartate 113, glutamate 122, aspartate 155, asparagine 157, aspartate 159, lysine 161, glutamate 166, aspartate 199, aspartate 201, asparagine 203, tyrosine 205, and glutamate 210.

The protein belongs to the calbindin family. As to quaternary structure, interacts with RANBP9.

Its function is as follows. Buffers cytosolic calcium. May stimulate a membrane Ca(2+)-ATPase and a 3',5'-cyclic nucleotide phosphodiesterase. The sequence is that of Calbindin (CALB1) from Pongo abelii (Sumatran orangutan).